The primary structure comprises 487 residues: Glutamyl-tRNA(Gln) amidotransferase subunit A (487 aa).

Residues Lys-80 and Ser-155 each act as charge relay system in the active site. The active-site Acyl-ester intermediate is the Ser-179.

It belongs to the amidase family. GatA subfamily. In terms of assembly, heterotrimer of A, B and C subunits.

The enzyme catalyses L-glutamyl-tRNA(Gln) + L-glutamine + ATP + H2O = L-glutaminyl-tRNA(Gln) + L-glutamate + ADP + phosphate + H(+). In terms of biological role, allows the formation of correctly charged Gln-tRNA(Gln) through the transamidation of misacylated Glu-tRNA(Gln) in organisms which lack glutaminyl-tRNA synthetase. The reaction takes place in the presence of glutamine and ATP through an activated gamma-phospho-Glu-tRNA(Gln). The sequence is that of Glutamyl-tRNA(Gln) amidotransferase subunit A from Leptospira interrogans serogroup Icterohaemorrhagiae serovar Lai (strain 56601).